The following is a 463-amino-acid chain: Argininosuccinate lyase (463 aa).

Residues S27, N115, and T161 each coordinate 2-(N(omega)-L-arginino)succinate. H162 (proton acceptor) is an active-site residue. S283 acts as the Proton donor in catalysis. Residues N291, Y323, Q328, and K331 each contribute to the 2-(N(omega)-L-arginino)succinate site.

The protein belongs to the lyase 1 family. Argininosuccinate lyase subfamily. In terms of assembly, homotetramer.

It carries out the reaction 2-(N(omega)-L-arginino)succinate = fumarate + L-arginine. Its pathway is amino-acid biosynthesis; L-arginine biosynthesis; L-arginine from L-ornithine and carbamoyl phosphate: step 3/3. The chain is Argininosuccinate lyase (ARG4) from Saccharomyces paradoxus (Yeast).